A 414-amino-acid chain; its full sequence is Esterase FrsA (414 aa).

This sequence belongs to the FrsA family.

The catalysed reaction is a carboxylic ester + H2O = an alcohol + a carboxylate + H(+). Catalyzes the hydrolysis of esters. The polypeptide is Esterase FrsA (Klebsiella pneumoniae (strain 342)).